A 94-amino-acid chain; its full sequence is Small ribosomal subunit protein uS19 (94 aa).

This sequence belongs to the universal ribosomal protein uS19 family.

Its function is as follows. Protein S19 forms a complex with S13 that binds strongly to the 16S ribosomal RNA. The polypeptide is Small ribosomal subunit protein uS19 (Anaplasma phagocytophilum (strain HZ)).